The primary structure comprises 1763 residues: Genome polyprotein (1763 aa).

Residues 458–614 (DGVITSCNKR…ESHKRARPGT (157 aa)) form the SF3 helicase domain. Residue 484-491 (GPPGCGKT) coordinates ATP. Residues 981–986 (DDEYDE) form an acidic region. Tyr-984 bears the O-(5'-phospho-RNA)-tyrosine mark. At Thr-1040 the chain carries Phosphothreonine. Ser-1067 bears the Phosphoserine mark. A Peptidase C24 domain is found at 1073 to 1229 (GPGTKFHKNA…KLVVPYVHID (157 aa)). Active-site for 3CLpro activity residues include His-1110, Glu-1131, and Cys-1193. The RdRp catalytic domain maps to 1478-1603 (AKVFAVDYSK…MFPIMYASIS (126 aa)).

Homodimer. Interacts with NTPase, protein p30 and protease-polymerase p76. As to quaternary structure, interacts with capsid protein VP1 and protease-polymerase p76. Interacts with host IEF4e; this interaction plays a role in translation of viral proteins. In terms of assembly, homooligomer. Interacts with Vpg, protein p32 and may interact with capsid protein VP1. In terms of processing, specific enzymatic cleavages in vivo yield mature proteins. Pro-Pol is first autocatalytically cleaved, then processes the whole polyprotein. VPg is uridylylated by the polymerase and is covalently attached to the 5'-end of the polyadenylated genomic and subgenomic RNAs. This uridylylated form acts as a nucleotide-peptide primer for the polymerase.

It is found in the host endoplasmic reticulum membrane. The catalysed reaction is a ribonucleoside 5'-triphosphate + H2O = a ribonucleoside 5'-diphosphate + phosphate + H(+). The enzyme catalyses RNA(n) + a ribonucleoside 5'-triphosphate = RNA(n+1) + diphosphate. It carries out the reaction Endopeptidase with a preference for cleavage when the P1 position is occupied by Glu-|-Xaa and the P1' position is occupied by Gly-|-Yaa.. Functionally, together with NTPase and NS4, initiates the formation of the replication complex. Induces the proliferation of the host smooth ER membranes forming long tubular structures. These remodeled membranes probably form the viral factories that contain the replication complex. Displays NTPase activity, but no helicase activity. Induces the formation of convoluted membranes derived from the host ER. These remodeled membranes probably form the viral factories that contain the replication complex. Together with NS2 and NS4, initiates the formation of the replication complex. Its function is as follows. Probable key protein responsible for the formation of membrane alterations by the virus. Induces the formation of convoluted membranes derived from the host ER. These remodeled membranes probably form the viral factories that contain the replication complex. Together with NS2 and NTPase, initiates the formation of the replication complex. In terms of biological role, viral genome-linked protein is covalently linked to the 5'-end of the positive-strand, negative-strand genomic RNAs and subgenomic RNA. Acts as a genome-linked replication primer. May recruit ribosome to viral RNA thereby promoting viral proteins translation. Interacts with host translation initiation complex to allow the translation of viral proteins. Functionally, protease-polymerase p76 processes the polyprotein: Pro-Pol is first released by autocleavage, then all other proteins are cleaved. Cleaves host translation initiation factor eIF4G1, eIF4G2 and PABP1 thereby inducing a shutdown of host protein synthesis. This shutdown may not prevent viral mRNA from being translated since viral Vpg replaces the cap. It is also an RNA-directed RNA polymerase which replicates genomic and antigenomic viral RNA by recognizing specific signals. Also transcribes a subgenomic mRNA by initiating RNA synthesis internally on antigenomic RNA. This sgRNA codes for structural proteins. Catalyzes the covalent attachment VPg with viral RNAs. Cleaves host G3BP1 thereby preventing the assembly of host stress granules. The protein is Genome polyprotein of Felidae (cat family).